The following is a 200-amino-acid chain: Holliday junction branch migration complex subunit RuvA (200 aa).

The tract at residues 1 to 64 is domain I; the sequence is MFAYFKGSLV…EDALQLYGFF (64 aa). The domain II stretch occupies residues 65–143; it reads KEEERQLFRL…KLPLVTPAAG (79 aa). The segment at 143–147 is flexible linker; that stretch reads GKAAM. The domain III stretch occupies residues 148-200; sequence PSHHVKDDAVHALVTLGFSRLLAQKAVSALLEEKPEQSVEEVIKYALATIHNS.

This sequence belongs to the RuvA family. As to quaternary structure, homotetramer. Forms an RuvA(8)-RuvB(12)-Holliday junction (HJ) complex. HJ DNA is sandwiched between 2 RuvA tetramers; dsDNA enters through RuvA and exits via RuvB. An RuvB hexamer assembles on each DNA strand where it exits the tetramer. Each RuvB hexamer is contacted by two RuvA subunits (via domain III) on 2 adjacent RuvB subunits; this complex drives branch migration. In the full resolvosome a probable DNA-RuvA(4)-RuvB(12)-RuvC(2) complex forms which resolves the HJ.

It localises to the cytoplasm. Its function is as follows. The RuvA-RuvB-RuvC complex processes Holliday junction (HJ) DNA during genetic recombination and DNA repair, while the RuvA-RuvB complex plays an important role in the rescue of blocked DNA replication forks via replication fork reversal (RFR). RuvA specifically binds to HJ cruciform DNA, conferring on it an open structure. The RuvB hexamer acts as an ATP-dependent pump, pulling dsDNA into and through the RuvAB complex. HJ branch migration allows RuvC to scan DNA until it finds its consensus sequence, where it cleaves and resolves the cruciform DNA. This Chlorobium phaeobacteroides (strain DSM 266 / SMG 266 / 2430) protein is Holliday junction branch migration complex subunit RuvA.